Reading from the N-terminus, the 208-residue chain is 3-isopropylmalate dehydratase small subunit 2 (208 aa).

This sequence belongs to the LeuD family. LeuD type 1 subfamily. In terms of assembly, heterodimer of LeuC and LeuD.

It carries out the reaction (2R,3S)-3-isopropylmalate = (2S)-2-isopropylmalate. It functions in the pathway amino-acid biosynthesis; L-leucine biosynthesis; L-leucine from 3-methyl-2-oxobutanoate: step 2/4. In terms of biological role, catalyzes the isomerization between 2-isopropylmalate and 3-isopropylmalate, via the formation of 2-isopropylmaleate. The protein is 3-isopropylmalate dehydratase small subunit 2 (leuD2) of Salmonella typhimurium (strain LT2 / SGSC1412 / ATCC 700720).